The chain runs to 169 residues: Disulfide bond formation protein B 1 (169 aa).

Residues 1 to 14 (MSEETIRLGRERRY) are Cytoplasmic-facing. A helical membrane pass occupies residues 15–31 (LVLLGIICLALIGGALY). The Periplasmic segment spans residues 32–49 (MQIVLGEAPCPLCILQRY). Cys41 and Cys44 are joined by a disulfide. The chain crosses the membrane as a helical span at residues 50–64 (ALLLIALFAFIGAAM). Over 65 to 71 (RTRRSIT) the chain is Cytoplasmic. The chain crosses the membrane as a helical span at residues 72–89 (VFEVLVVICAIAGAGVAG). The Periplasmic portion of the chain corresponds to 90–144 (HHVYTQFYPAVSCGIDVLQPIVDDLPLAKIFPLGFQVDGFCSTPYPPILGLSLAQ). The cysteines at positions 102 and 130 are disulfide-linked. Residues 145–163 (WALVAFVLVVILVPLLTSR) traverse the membrane as a helical segment. Topologically, residues 164-169 (NRKALR) are cytoplasmic.

It belongs to the DsbB family.

The protein resides in the cell inner membrane. Its function is as follows. Required for disulfide bond formation in some periplasmic proteins. Acts by oxidizing the DsbA protein. The polypeptide is Disulfide bond formation protein B 1 (Pseudomonas fluorescens (strain Pf0-1)).